A 354-amino-acid chain; its full sequence is Uroporphyrinogen decarboxylase (354 aa).

Residues 30 to 34 (RQAGR), D79, Y154, S209, and H333 each bind substrate.

The protein belongs to the uroporphyrinogen decarboxylase family. As to quaternary structure, homodimer.

The protein localises to the cytoplasm. The catalysed reaction is uroporphyrinogen III + 4 H(+) = coproporphyrinogen III + 4 CO2. The protein operates within porphyrin-containing compound metabolism; protoporphyrin-IX biosynthesis; coproporphyrinogen-III from 5-aminolevulinate: step 4/4. Functionally, catalyzes the decarboxylation of four acetate groups of uroporphyrinogen-III to yield coproporphyrinogen-III. In Mycobacterium sp. (strain JLS), this protein is Uroporphyrinogen decarboxylase.